The following is a 362-amino-acid chain: Holliday junction branch migration complex subunit RuvB (362 aa).

A disordered region spans residues 1-27; that stretch reads MANIEKTEFHVPAPVSAAGNQKSSLGN. The tract at residues 13–206 is large ATPase domain (RuvB-L); sequence APVSAAGNQK…FGFTAQMEFY (194 aa). ATP is bound by residues Leu45, Arg46, Gly87, Lys90, Thr91, Thr92, 153 to 155, Arg196, Tyr206, and Arg243; that span reads EDF. Thr91 lines the Mg(2+) pocket. Positions 207–277 are small ATPAse domain (RuvB-S); it reads EVEDLTKVVV…AAQAALVVFD (71 aa). Residues 280 to 362 form a head domain (RuvB-H) region; sequence EMGLDRLDRA…EPPEGIIGSL (83 aa). Residues Arg335 and Arg340 each contribute to the DNA site.

This sequence belongs to the RuvB family. As to quaternary structure, homohexamer. Forms an RuvA(8)-RuvB(12)-Holliday junction (HJ) complex. HJ DNA is sandwiched between 2 RuvA tetramers; dsDNA enters through RuvA and exits via RuvB. An RuvB hexamer assembles on each DNA strand where it exits the tetramer. Each RuvB hexamer is contacted by two RuvA subunits (via domain III) on 2 adjacent RuvB subunits; this complex drives branch migration. In the full resolvosome a probable DNA-RuvA(4)-RuvB(12)-RuvC(2) complex forms which resolves the HJ.

It localises to the cytoplasm. The enzyme catalyses ATP + H2O = ADP + phosphate + H(+). Its function is as follows. The RuvA-RuvB-RuvC complex processes Holliday junction (HJ) DNA during genetic recombination and DNA repair, while the RuvA-RuvB complex plays an important role in the rescue of blocked DNA replication forks via replication fork reversal (RFR). RuvA specifically binds to HJ cruciform DNA, conferring on it an open structure. The RuvB hexamer acts as an ATP-dependent pump, pulling dsDNA into and through the RuvAB complex. RuvB forms 2 homohexamers on either side of HJ DNA bound by 1 or 2 RuvA tetramers; 4 subunits per hexamer contact DNA at a time. Coordinated motions by a converter formed by DNA-disengaged RuvB subunits stimulates ATP hydrolysis and nucleotide exchange. Immobilization of the converter enables RuvB to convert the ATP-contained energy into a lever motion, pulling 2 nucleotides of DNA out of the RuvA tetramer per ATP hydrolyzed, thus driving DNA branch migration. The RuvB motors rotate together with the DNA substrate, which together with the progressing nucleotide cycle form the mechanistic basis for DNA recombination by continuous HJ branch migration. Branch migration allows RuvC to scan DNA until it finds its consensus sequence, where it cleaves and resolves cruciform DNA. In Corynebacterium diphtheriae (strain ATCC 700971 / NCTC 13129 / Biotype gravis), this protein is Holliday junction branch migration complex subunit RuvB.